The primary structure comprises 565 residues: Granule-bound starch synthase 1b, chloroplastic/amyloplastic (565 aa).

Residues 1–34 constitute a chloroplast transit peptide; that stretch reads VFLSMRNKTQLAKRRATNYETHRNSSRTSSPIVC. Lysine 52 is an ADP-alpha-D-glucose binding site.

The protein belongs to the glycosyltransferase 1 family. Bacterial/plant glycogen synthase subfamily.

The protein localises to the plastid. It is found in the chloroplast. The protein resides in the amyloplast. The enzyme catalyses an NDP-alpha-D-glucose + [(1-&gt;4)-alpha-D-glucosyl](n) = [(1-&gt;4)-alpha-D-glucosyl](n+1) + a ribonucleoside 5'-diphosphate + H(+). It functions in the pathway glycan biosynthesis; starch biosynthesis. Functionally, involved in the synthesis of amylose in endosperm. The polypeptide is Granule-bound starch synthase 1b, chloroplastic/amyloplastic (Hordeum vulgare (Barley)).